Consider the following 246-residue polypeptide: Homeobox protein Hox-B4a (246 aa).

The disordered stretch occupies residues Tyr23–Arg125. 2 stretches are compositionally biased toward polar residues: residues Ala39–His48 and Gln112–Ser123. Positions Val130–Lys135 match the Antp-type hexapeptide motif. The segment at residues Pro151–His210 is a DNA-binding region (homeobox). The tract at residues His210 to Leu246 is disordered. Residues Lys216–Ala239 are compositionally biased toward polar residues.

The protein belongs to the Antp homeobox family. Deformed subfamily.

It is found in the nucleus. Sequence-specific transcription factor which is part of a developmental regulatory system that provides cells with specific positional identities on the anterior-posterior axis. The sequence is that of Homeobox protein Hox-B4a (hoxb4a) from Danio rerio (Zebrafish).